Here is an 842-residue protein sequence, read N- to C-terminus: Pentatricopeptide repeat-containing protein At3g22690 (842 aa).

16 PPR repeats span residues 98-132 (TCFM…GISP), 133-167 (DKYT…GYAK), 168-202 (DLFV…NVVS), 203-234 (WTSM…EVTP), 235-269 (NSVT…GIEV), 270-300 (NDLM…YGAS), 301-335 (NLDL…GVRP), 336-370 (DRIS…GFES), 371-401 (WDNI…MSNK), 402-436 (TVVT…NIVS), 437-463 (WNTI…MQSQ), 469-503 (DGVT…GIQL), 504-534 (DVRL…LTNR), 535-569 (DVSA…GLKP), 570-605 (DGVA…GVSP), and 606-636 (EDVH…MPME). The segment at 641-716 (IWNSLLAACR…PPGTSSIQIR (76 aa)) is type E motif. A type E(+) motif region spans residues 717–747 (GKTHEFTSGDESHPEMPNIEAMLDEVSQRAS). The segment at 748–842 (HLGHVPDLSN…QGKCSCGDFW (95 aa)) is type DYW motif.

Belongs to the PPR family. PCMP-H subfamily.

The sequence is that of Pentatricopeptide repeat-containing protein At3g22690 (PCMP-H56) from Arabidopsis thaliana (Mouse-ear cress).